The following is an 82-amino-acid chain: Small ribosomal subunit protein bS18 (82 aa).

The tract at residues 1–25 is disordered; that stretch reads MKRNNMKRARMEQSRRPKKNPLKAE.

Belongs to the bacterial ribosomal protein bS18 family. As to quaternary structure, part of the 30S ribosomal subunit. Forms a tight heterodimer with protein bS6.

Its function is as follows. Binds as a heterodimer with protein bS6 to the central domain of the 16S rRNA, where it helps stabilize the platform of the 30S subunit. In Corynebacterium urealyticum (strain ATCC 43042 / DSM 7109), this protein is Small ribosomal subunit protein bS18.